The sequence spans 274 residues: ATP synthase subunit delta (274 aa).

The protein belongs to the ATPase delta chain family. As to quaternary structure, F-type ATPases have 2 components, F(1) - the catalytic core - and F(0) - the membrane proton channel. F(1) has five subunits: alpha(3), beta(3), gamma(1), delta(1), epsilon(1). F(0) has three main subunits: a(1), b(2) and c(10-14). The alpha and beta chains form an alternating ring which encloses part of the gamma chain. F(1) is attached to F(0) by a central stalk formed by the gamma and epsilon chains, while a peripheral stalk is formed by the delta and b chains.

It is found in the cell membrane. In terms of biological role, f(1)F(0) ATP synthase produces ATP from ADP in the presence of a proton or sodium gradient. F-type ATPases consist of two structural domains, F(1) containing the extramembraneous catalytic core and F(0) containing the membrane proton channel, linked together by a central stalk and a peripheral stalk. During catalysis, ATP synthesis in the catalytic domain of F(1) is coupled via a rotary mechanism of the central stalk subunits to proton translocation. Functionally, this protein is part of the stalk that links CF(0) to CF(1). It either transmits conformational changes from CF(0) to CF(1) or is implicated in proton conduction. This chain is ATP synthase subunit delta, found in Streptomyces coelicolor (strain ATCC BAA-471 / A3(2) / M145).